The primary structure comprises 832 residues: Vacuolar transmembrane transporter penV (832 aa).

2 helical membrane-spanning segments follow: residues 39-59 (LYTQFVISTALGLSAFLAFCI) and 117-137 (FFKFAIRFLLAVFIFAVAIIL). The tract at residues 152–171 (WDNPPGNKTTSPIDGSEKEK) is disordered. N-linked (GlcNAc...) asparagine glycosylation is present at N158. The chain crosses the membrane as a helical span at residues 178-198 (YLWIYVLFAYVFSGLAIYMLL). An N-linked (GlcNAc...) asparagine glycan is attached at N214. The segment at 291–322 (NDGNALPLTEQQPRDADDERSGLLSGHDNEHV) is disordered. Over residues 302-321 (QPRDADDERSGLLSGHDNEH) the composition is skewed to basic and acidic residues. 9 helical membrane passes run 434 to 454 (FVIGFLTVFWSVLLVPIASLL), 483 to 503 (GLPTLAFSLLTVAVPYLYEWL), 524 to 544 (FFFSFFNLFLLFTVFGTASGF), 560 to 582 (TIALALANSLEGLAPFYINLLIL), 587 to 608 (LFPFRLLEFGSVALYPFQFLSA), 623 to 645 (FSYGFSIPQTILILVICVVYSVF), 650 to 672 (LICLFGLIYFTVGKFIYKYQLLY), 687 to 707 (MICNRVFVGLLVHQLAMIGVL), and 713 to 733 (ITRSLLLVPLLGFTVWFSYWF). Residues 754–777 (PGGGDISPSPSSTLSPPSGLDRDS) form a disordered region. The span at 759–771 (ISPSPSSTLSPPS) shows a compositional bias: low complexity.

Belongs to the CSC1 (TC 1.A.17) family.

It localises to the vacuole membrane. Functionally, vacuolar transmembrane transporter that participates in the first stage of the beta-lactam biosynthesis (the formation of the ACV tripeptide), probably taking part in the supply of amino acids from the vacuolar lumen to the vacuole-anchored ACV synthetase. This is Vacuolar transmembrane transporter penV from Penicillium rubens (strain ATCC 28089 / DSM 1075 / NRRL 1951 / Wisconsin 54-1255) (Penicillium chrysogenum).